A 483-amino-acid polypeptide reads, in one-letter code: Leukocyte immunoglobulin-like receptor subfamily A member 2 (483 aa).

A signal peptide spans 1–23; that stretch reads MTPILTVLICLGLSLGPRTHVQA. The Extracellular portion of the chain corresponds to 24–449; sequence GHLPKPTLWA…QHPQDYTVEN (426 aa). Ig-like C2-type domains follow at residues 27–113, 117–222, 224–313, and 324–413; these read PKPT…DPLE, TGAY…GVSK, PSLS…DPLD, and PSLS…SDPL. Cys49 and Cys97 are disulfide-bonded. Asn64, Asn103, and Asn138 each carry an N-linked (GlcNAc...) asparagine glycan. Disulfide bonds link Cys143–Cys195 and Cys244–Cys295. 3 N-linked (GlcNAc...) asparagine glycosylation sites follow: Asn279, Asn300, and Asn339. Residues Cys344 and Cys395 are joined by a disulfide bond. 3'-nitrotyrosine is present on Tyr404. Asn429 is a glycosylation site (N-linked (GlcNAc...) asparagine). The helical transmembrane segment at 450 to 470 threads the bilayer; it reads LIRMGVAGLVLVVLGILLFEA. Over 471 to 483 the chain is Cytoplasmic; it reads QHSQRSLQDAAGR.

Homodimer. Detected on the surface of all peripheral blood monocytes, neutrophils, basophils and eosinophils (at protein level). Expression levels are very low or not detectable on monocytes, T-cells, B-cells, dendritic cells and natural killer (NK) cells.

The protein localises to the cell membrane. It is found in the secreted. In terms of biological role, part of the innate immune responses against microbial infection. Specifically recognizes a set of N-terminally truncated immunoglobulins that are produced via cleavage by proteases from a range of pathogenic bacteria and fungi, including L.pneumophila, M.hyorhinis, S.pneumoniae, S.aureus and C.albicans. Recognizes epitopes that are in part in the variable region of the immunoglobulin light chains, but requires also the constant region for signaling. Binds to a subset of cleaved IgM, IgG3 and IgG4 molecules, but does not bind cleaved IgA1. Binding of N-terminally truncated immunoglobulins mediates activation of neutrophils. In monocytes, activation leads to the release of CSF2, CF3, IL6, CXCL8 and CCL3 and down-regulates responses to bacterial lipopolysaccharide (LPS), possibly via down-regulation of TLR4 expression and reduced signaling via TLR4. In eosinophils, activation by ligand binding leads to the release of RNASE2, IL4 and leukotriene C4. Does not bind class I MHC antigens. This chain is Leukocyte immunoglobulin-like receptor subfamily A member 2 (LILRA2), found in Homo sapiens (Human).